A 134-amino-acid polypeptide reads, in one-letter code: Cytochrome b (134 aa).

Helical transmembrane passes span 33-53 (FGSL…FLAM), 77-98 (WLLR…YLHV), and 113-133 (WNVG…GYVL). Heme b is bound by residues histidine 83 and histidine 97.

It belongs to the cytochrome b family. The cytochrome bc1 complex contains 11 subunits: 3 respiratory subunits (MT-CYB, CYC1 and UQCRFS1), 2 core proteins (UQCRC1 and UQCRC2) and 6 low-molecular weight proteins (UQCRH/QCR6, UQCRB/QCR7, UQCRQ/QCR8, UQCR10/QCR9, UQCR11/QCR10 and a cleavage product of UQCRFS1). This cytochrome bc1 complex then forms a dimer. It depends on heme b as a cofactor.

The protein resides in the mitochondrion inner membrane. Component of the ubiquinol-cytochrome c reductase complex (complex III or cytochrome b-c1 complex) that is part of the mitochondrial respiratory chain. The b-c1 complex mediates electron transfer from ubiquinol to cytochrome c. Contributes to the generation of a proton gradient across the mitochondrial membrane that is then used for ATP synthesis. This is Cytochrome b (MT-CYB) from Chiroderma trinitatum (Little big-eyed bat).